We begin with the raw amino-acid sequence, 313 residues long: MIIVTGGAGMIGSNIVKALNEIGINDILVVDNLKNGRKFKNLVDLDITDYMDRDDFLTQIMAGDNFGPIEAVFHEGACSATTEWDGKYMMLNNYEYSKELLHYCLEREIPFLYASSAATYGETTVFKEEREYEGALNVYGYSKQQFDNYVRRLWQDAEEHGETLSQITGFRYFNVYGPREQHKGSMASVAFHLNNQILAGENPKLFAGSEQFKRDFIYVGDVCKVNLWFMQNGVSGIFNCGTGNAESFEEVAKAVIKHHGKGEIETIPFPEHLKGAYQEFTQADLTKLRAAGCDVEFKNVAEGVAEYMAIVNG.

Residues 10-11 (MI), 31-32 (DN), K38, R53, 75-79 (EGACS), and N92 contribute to the NADP(+) site. The active-site Proton acceptor is the Y139. An NADP(+)-binding site is contributed by K143. N174 serves as a coordination point for substrate. NADP(+) is bound by residues V175 and K183. Catalysis depends on K183, which acts as the Proton acceptor. Substrate-binding positions include S185, H192, 206-209 (FAGS), R214, and Y277.

This sequence belongs to the NAD(P)-dependent epimerase/dehydratase family. HldD subfamily. Homopentamer. NADP(+) serves as cofactor.

The enzyme catalyses ADP-D-glycero-beta-D-manno-heptose = ADP-L-glycero-beta-D-manno-heptose. It participates in nucleotide-sugar biosynthesis; ADP-L-glycero-beta-D-manno-heptose biosynthesis; ADP-L-glycero-beta-D-manno-heptose from D-glycero-beta-D-manno-heptose 7-phosphate: step 4/4. It functions in the pathway bacterial outer membrane biogenesis; LPS core biosynthesis. Its function is as follows. Catalyzes the interconversion between ADP-D-glycero-beta-D-manno-heptose and ADP-L-glycero-beta-D-manno-heptose via an epimerization at carbon 6 of the heptose. In Vibrio vulnificus (strain YJ016), this protein is ADP-L-glycero-D-manno-heptose-6-epimerase.